The sequence spans 180 residues: NAD(P)H-quinone oxidoreductase subunit I, chloroplastic (180 aa).

4Fe-4S ferredoxin-type domains are found at residues glycine 55–arginine 84 and leucine 95–glutamate 124. Cysteine 64, cysteine 67, cysteine 70, cysteine 74, cysteine 104, cysteine 107, cysteine 110, and cysteine 114 together coordinate [4Fe-4S] cluster.

Belongs to the complex I 23 kDa subunit family. In terms of assembly, NDH is composed of at least 16 different subunits, 5 of which are encoded in the nucleus. It depends on [4Fe-4S] cluster as a cofactor.

It localises to the plastid. Its subcellular location is the chloroplast thylakoid membrane. It catalyses the reaction a plastoquinone + NADH + (n+1) H(+)(in) = a plastoquinol + NAD(+) + n H(+)(out). The catalysed reaction is a plastoquinone + NADPH + (n+1) H(+)(in) = a plastoquinol + NADP(+) + n H(+)(out). NDH shuttles electrons from NAD(P)H:plastoquinone, via FMN and iron-sulfur (Fe-S) centers, to quinones in the photosynthetic chain and possibly in a chloroplast respiratory chain. The immediate electron acceptor for the enzyme in this species is believed to be plastoquinone. Couples the redox reaction to proton translocation, and thus conserves the redox energy in a proton gradient. The chain is NAD(P)H-quinone oxidoreductase subunit I, chloroplastic from Liriodendron tulipifera (Tuliptree).